The following is a 250-amino-acid chain: Putative ankyrin repeat protein RBE_0623 (250 aa).

ANK repeat units follow at residues Ile70–Thr99, Asn104–Glu134, and Gly137–Phe166.

The sequence is that of Putative ankyrin repeat protein RBE_0623 from Rickettsia bellii (strain RML369-C).